A 204-amino-acid polypeptide reads, in one-letter code: MSKFSYPALRAALILAASPVLPALANDGTIVITGSISDQTCVIEEPSTLNHIKVVQLPKISKNALRNDGDTAGATPFDIKLKECPQALGALKLYFEPGITTNYDTGDLIAYKQTYNASGNGNLSTVSSATKAKGVEFRLANLNGQHIRMGTDKTTQAAQTFTGKVTNGSKSYTLRYLASYVKKPKEDVDAAQITSYVGFSVVYP.

A signal peptide spans 1–25 (MSKFSYPALRAALILAASPVLPALA). The cysteines at positions 41 and 84 are disulfide-linked.

Belongs to the fimbrial protein family.

It localises to the fimbrium. Bordetella pertussis is the causative agent of whooping cough. An essential step in the disease process is the attachment of the bacteria to the ciliated epithelium of the respiratory tract, enabling the organism to resist normal host-clearance mechanisms. It is unclear which bacterial cell surface component are responsible for adherence but the fimbriae of B.pertussis are prime candidates for being involved in this process. This chain is Serotype 3 fimbrial subunit (fim3), found in Bordetella pertussis (strain Tohama I / ATCC BAA-589 / NCTC 13251).